A 437-amino-acid polypeptide reads, in one-letter code: Enolase-related protein 1 (437 aa).

The substrate site is built by His-160 and Glu-169. The Proton donor role is filled by Glu-212. Mg(2+)-binding residues include Asp-247, Glu-296, and Asp-321. Glu-296 and Asp-321 together coordinate substrate. The Proton acceptor role is filled by Lys-346. Residues 373-376 (SHRS) and Lys-397 each bind substrate.

This sequence belongs to the enolase family. The cofactor is Mg(2+).

It catalyses the reaction (2R)-2-phosphoglycerate = phosphoenolpyruvate + H2O. The protein operates within carbohydrate degradation; glycolysis; pyruvate from D-glyceraldehyde 3-phosphate: step 4/5. The sequence is that of Enolase-related protein 1 (ERR1) from Saccharomyces cerevisiae (strain ATCC 204508 / S288c) (Baker's yeast).